We begin with the raw amino-acid sequence, 510 residues long: tRNA-2-methylthio-N(6)-dimethylallyladenosine synthase (510 aa).

The disordered stretch occupies residues 1 to 25 (MSGFNDSPVPESAEKADGLLSQERG). The MTTase N-terminal domain occupies 34 to 154 (RKLFVKSYGC…LPDLLRRVAH (121 aa)). [4Fe-4S] cluster contacts are provided by cysteine 43, cysteine 79, cysteine 117, cysteine 195, cysteine 199, and cysteine 202. A Radical SAM core domain is found at 181–414 (AERGVGAFVT…QALLEEQRQA (234 aa)). Residues 417-479 (KAMIGRVLPV…PNSFHGRLLA (63 aa)) enclose the TRAM domain. Residues 484-493 (QESAQGQESA) show a composition bias toward polar residues. The disordered stretch occupies residues 484–510 (QESAQGQESAQGMERMEQNARAWEVPV).

The protein belongs to the methylthiotransferase family. MiaB subfamily. As to quaternary structure, monomer. [4Fe-4S] cluster is required as a cofactor.

It localises to the cytoplasm. The enzyme catalyses N(6)-dimethylallyladenosine(37) in tRNA + (sulfur carrier)-SH + AH2 + 2 S-adenosyl-L-methionine = 2-methylsulfanyl-N(6)-dimethylallyladenosine(37) in tRNA + (sulfur carrier)-H + 5'-deoxyadenosine + L-methionine + A + S-adenosyl-L-homocysteine + 2 H(+). Functionally, catalyzes the methylthiolation of N6-(dimethylallyl)adenosine (i(6)A), leading to the formation of 2-methylthio-N6-(dimethylallyl)adenosine (ms(2)i(6)A) at position 37 in tRNAs that read codons beginning with uridine. The polypeptide is tRNA-2-methylthio-N(6)-dimethylallyladenosine synthase (Beijerinckia indica subsp. indica (strain ATCC 9039 / DSM 1715 / NCIMB 8712)).